The primary structure comprises 241 residues: Core protein D3 homolog (241 aa).

This sequence belongs to the chordopoxvirinae D3 family.

Its subcellular location is the virion. Late protein which is part of a large complex required for early virion morphogenesis. This complex participates in the formation of virosomes and the incorporation of virosomal contents into nascent immature virions. This Oryctolagus cuniculus (Rabbit) protein is Core protein D3 homolog.